Reading from the N-terminus, the 729-residue chain is Receptor-like protein 2 (729 aa).

The first 44 residues, 1–44, serve as a signal peptide directing secretion; it reads MRSKAKGLVRPLITKPVQPLSSHMHLFLLCILFLSALFLTLSEA. An N-cap region spans residues 45–82; it reads VCNLQDRESLIWFSGNVSSSVSPLNWNLSIDCCSWEGI. The Extracellular segment spans residues 45 to 707; that stretch reads VCNLQDRESL…AKENDELNRT (663 aa). N-linked (GlcNAc...) asparagine glycans are attached at residues Asn-60 and Asn-71. LRR repeat units lie at residues 89–113, 114–137, 139–163, 168–193, 195–219, 220–244, 245–268, 269–292, 293–316, 317–340, 342–364, 365–389, 391–413, 414–437, 439–464, 468–492, 493–515, 516–540, 542–560, and 561–584; these read DSHVTVISLPSRGLSGTLASSVQNI, HRLSRLDLSYNRLSGPLPPGFFST, DQLMILNLSYNSFNGELPLEQAFGN, FFSIQTLDLSSNLLEGEILRSSVYLQ, TINLISFNVSNNSFTGPIPSFMCRS, SPQLSKLDFSYNDFSGHISQELGRC, LRLTVLQAGFNNLSGVIPSEIYNL, SELEQLFLPANQLTGKIDNNITRL, RKLTSLALYSNHLEGEIPMDIGNL, SSLRSLQLHINNINGTVPLSLANC, KLVKLNLRVNQLGGGLTELEFSQ, LQSLKVLDLGNNSFTGALPDKIFSC, SLTAIRFAGNKLTGEISPQVLEL, ESLSFMGLSDNKLTNITGALSILQ, CRKLSTLILAKNFYDETVPSKEDFLS, FPKLRIFGVGACRLRGEIPAWLINL, NKVEVMDLSMNRFVGSIPGWLGT, LPDLFYLDLSDNLLTGELPKELFQL, ALMSQKITENNYLELPIFL, and NPNNVTTNQQYNKLYSFPPTIYIR. N-linked (GlcNAc...) asparagine glycosylation is found at Asn-145 and Asn-163. N-linked (GlcNAc...) asparagine glycosylation is found at Asn-202 and Asn-205. Asn-256, Asn-267, Asn-288, Asn-315, Asn-330, and Asn-339 each carry an N-linked (GlcNAc...) asparagine glycan. Asn-375 carries N-linked (GlcNAc...) asparagine glycosylation. The N-linked (GlcNAc...) asparagine glycan is linked to Asn-428. N-linked (GlcNAc...) asparagine glycosylation is found at Asn-564, Asn-587, Asn-611, Asn-622, Asn-635, Asn-657, and Asn-705. LRR repeat units lie at residues 599–623, 624–647, and 649–672; these read LKVLHILELLGNNLSGSIPDELSNL, TNLERLDLSNNNLSGSIPWSLTNL, and FLSYFNVANNSLEGPIPSEGQFDT. The C-cap/acidic domain stretch occupies residues 690 to 707; sequence LTSCKPTRAKENDELNRT. Residues 708–728 traverse the membrane as a helical segment; the sequence is FLMGIAIGYFLSFVSILVVRA. Position 729 (Trp-729) is a topological domain, cytoplasmic.

Belongs to the RLP family.

Its subcellular location is the cell membrane. Its function is as follows. Involved in the perception of CLV3 and CLV3-like peptides, that act as extracellular signals regulating meristems maintenance. The protein is Receptor-like protein 2 of Arabidopsis thaliana (Mouse-ear cress).